Reading from the N-terminus, the 411-residue chain is LL-diaminopimelate aminotransferase (411 aa).

Residues Y16 and G43 each contribute to the substrate site. Residues Y73, 109–110 (AK), Y133, N188, Y219, and 247–249 (SYS) contribute to the pyridoxal 5'-phosphate site. Substrate contacts are provided by K110, Y133, and N188. K250 carries the N6-(pyridoxal phosphate)lysine modification. Residues R258 and N293 each coordinate pyridoxal 5'-phosphate. The substrate site is built by N293 and R389.

This sequence belongs to the class-I pyridoxal-phosphate-dependent aminotransferase family. LL-diaminopimelate aminotransferase subfamily. Homodimer. Pyridoxal 5'-phosphate serves as cofactor.

The catalysed reaction is (2S,6S)-2,6-diaminopimelate + 2-oxoglutarate = (S)-2,3,4,5-tetrahydrodipicolinate + L-glutamate + H2O + H(+). The protein operates within amino-acid biosynthesis; L-lysine biosynthesis via DAP pathway; LL-2,6-diaminopimelate from (S)-tetrahydrodipicolinate (aminotransferase route): step 1/1. In terms of biological role, involved in the synthesis of meso-diaminopimelate (m-DAP or DL-DAP), required for both lysine and peptidoglycan biosynthesis. Catalyzes the direct conversion of tetrahydrodipicolinate to LL-diaminopimelate. The protein is LL-diaminopimelate aminotransferase of Methanosphaera stadtmanae (strain ATCC 43021 / DSM 3091 / JCM 11832 / MCB-3).